A 1040-amino-acid chain; its full sequence is Protocadherin-10 (1040 aa).

An N-terminal signal peptide occupies residues 1 to 18; that stretch reads MIVLLLFALLWMVEGVFS. Cadherin domains are found at residues 19 to 122, 123 to 250, 251 to 358, 359 to 463, 464 to 574, and 582 to 690; these read QLHY…PPSF, PEPD…VPAF, DQPV…APEI, SFST…APRF, SQPV…APAI, and NGTP…GGGG. Residues 19–715 lie on the Extracellular side of the membrane; sequence QLHYTVQEEQ…GGGETSLDLT (697 aa). Over residues 207 to 223 the composition is skewed to gly residues; it reads GGGGGVGEGGGGGGGAG. Residues 207–228 form a disordered region; it reads GGGGGVGEGGGGGGGAGLPPQQ. N-linked (GlcNAc...) asparagine glycosylation occurs at Asn-273. An N-linked (GlcNAc...) asparagine glycan is attached at Asn-557. Over residues 686 to 697 the composition is skewed to gly residues; that stretch reads QGGGGSGGGGSG. The segment at 686 to 708 is disordered; it reads QGGGGSGGGGSGEHQRPSRSGGG. Residues 716 to 736 traverse the membrane as a helical segment; that stretch reads LILIIALGSVSFIFLLAMIVL. Topologically, residues 737-1040 are cytoplasmic; the sequence is AVRCQKEKKL…PPYLTRKRIC (304 aa). A disordered region spans residues 899–927; the sequence is AFQEADIVSSKDSGHGDSEQGDSDHDATN. The segment covering 910-926 has biased composition (basic and acidic residues); sequence DSGHGDSEQGDSDHDAT.

In terms of tissue distribution, moderately expressed in all regions of the brain examined, as well as in testis and ovary, and low expression in all other tissues tested.

Its subcellular location is the cell membrane. Its function is as follows. Potential calcium-dependent cell-adhesion protein. In terms of biological role, (Microbial infection) Acts as a receptor for Western equine encephalitis virus. The chain is Protocadherin-10 (PCDH10) from Homo sapiens (Human).